We begin with the raw amino-acid sequence, 102 residues long: Small ribosomal subunit protein uS10 (102 aa).

Belongs to the universal ribosomal protein uS10 family. In terms of assembly, part of the 30S ribosomal subunit.

Its function is as follows. Involved in the binding of tRNA to the ribosomes. The protein is Small ribosomal subunit protein uS10 of Gluconobacter oxydans (strain 621H) (Gluconobacter suboxydans).